Consider the following 329-residue polypeptide: Tetraacyldisaccharide 4'-kinase (329 aa).

Residue 58–65 coordinates ATP; sequence SVGGTGKT.

It belongs to the LpxK family.

It catalyses the reaction a lipid A disaccharide + ATP = a lipid IVA + ADP + H(+). The protein operates within glycolipid biosynthesis; lipid IV(A) biosynthesis; lipid IV(A) from (3R)-3-hydroxytetradecanoyl-[acyl-carrier-protein] and UDP-N-acetyl-alpha-D-glucosamine: step 6/6. Transfers the gamma-phosphate of ATP to the 4'-position of a tetraacyldisaccharide 1-phosphate intermediate (termed DS-1-P) to form tetraacyldisaccharide 1,4'-bis-phosphate (lipid IVA). This Idiomarina loihiensis (strain ATCC BAA-735 / DSM 15497 / L2-TR) protein is Tetraacyldisaccharide 4'-kinase.